The chain runs to 307 residues: Pyridoxal 5'-phosphate synthase subunit PdxS (307 aa).

D37 serves as a coordination point for D-ribose 5-phosphate. Catalysis depends on K94, which acts as the Schiff-base intermediate with D-ribose 5-phosphate. G166 lines the D-ribose 5-phosphate pocket. Position 178 (R178) interacts with D-glyceraldehyde 3-phosphate. Residues G227 and 248–249 each bind D-ribose 5-phosphate; that span reads GS.

It belongs to the PdxS/SNZ family. As to quaternary structure, in the presence of PdxT, forms a dodecamer of heterodimers.

The enzyme catalyses aldehydo-D-ribose 5-phosphate + D-glyceraldehyde 3-phosphate + L-glutamine = pyridoxal 5'-phosphate + L-glutamate + phosphate + 3 H2O + H(+). It functions in the pathway cofactor biosynthesis; pyridoxal 5'-phosphate biosynthesis. Catalyzes the formation of pyridoxal 5'-phosphate from ribose 5-phosphate (RBP), glyceraldehyde 3-phosphate (G3P) and ammonia. The ammonia is provided by the PdxT subunit. Can also use ribulose 5-phosphate and dihydroxyacetone phosphate as substrates, resulting from enzyme-catalyzed isomerization of RBP and G3P, respectively. This chain is Pyridoxal 5'-phosphate synthase subunit PdxS, found in Mycobacterium leprae (strain Br4923).